The following is a 99-amino-acid chain: NADH-quinone oxidoreductase subunit K (99 aa).

The next 3 membrane-spanning stretches (helical) occupy residues 3–23 (PANYLYLSVLLFTIGASGVLL), 28–48 (IVMFMCVELMLNAVNLAFVTF), and 59–79 (MIAFFTMVVAACEVVVGLAII).

The protein belongs to the complex I subunit 4L family. NDH-1 is composed of 14 different subunits. Subunits NuoA, H, J, K, L, M, N constitute the membrane sector of the complex.

It localises to the cell membrane. The enzyme catalyses a quinone + NADH + 5 H(+)(in) = a quinol + NAD(+) + 4 H(+)(out). Functionally, NDH-1 shuttles electrons from NADH, via FMN and iron-sulfur (Fe-S) centers, to quinones in the respiratory chain. The immediate electron acceptor for the enzyme in this species is believed to be a menaquinone. Couples the redox reaction to proton translocation (for every two electrons transferred, four hydrogen ions are translocated across the cytoplasmic membrane), and thus conserves the redox energy in a proton gradient. The polypeptide is NADH-quinone oxidoreductase subunit K (Mycobacterium bovis (strain ATCC BAA-935 / AF2122/97)).